We begin with the raw amino-acid sequence, 132 residues long: Small ribosomal subunit protein uS11 (132 aa).

It belongs to the universal ribosomal protein uS11 family. As to quaternary structure, part of the 30S ribosomal subunit.

Its function is as follows. Located on the platform of the 30S subunit. In Saccharolobus solfataricus (strain ATCC 35092 / DSM 1617 / JCM 11322 / P2) (Sulfolobus solfataricus), this protein is Small ribosomal subunit protein uS11.